A 367-amino-acid chain; its full sequence is Selenoprotein Pa (367 aa).

A signal peptide spans 1-19 (MWKALSLTLALCLLVGCSA). Position 59 (U59) is a non-standard amino acid, selenocysteine. An N-linked (GlcNAc...) asparagine glycan is attached at N109. Basic and acidic residues predominate over residues 191–220 (EVNKPVEEEPRQDHGHHEHGHHEHQGEAER). The segment at 191–241 (EVNKPVEEEPRQDHGHHEHGHHEHQGEAERHRHGHHHPHHHHHHHRGQQQV) is disordered. Positions 221–237 (HRHGHHHPHHHHHHHRG) are enriched in basic residues. Non-standard amino acids (selenocysteine) are located at U267, U273, U279, U290, U292, U294, U310, U320, U322, U336, U338, U346, U353, U355, U362, and U364. The disordered stretch occupies residues 309-367 (LUHCDEPLPASUPUQGLKEQDNHIKETUQURPAPPAEUELSQPTUVUPAGDATUGURKK). The segment covering 326–336 (KEQDNHIKETU) has biased composition (basic and acidic residues).

This sequence belongs to the selenoprotein P family.

It is found in the secreted. Functionally, might be responsible for some of the extracellular antioxidant defense properties of selenium or might be involved in the transport of selenium. This chain is Selenoprotein Pa (sepp1a), found in Danio rerio (Zebrafish).